The chain runs to 252 residues: 5-oxoprolinase subunit A 1 (252 aa).

This sequence belongs to the LamB/PxpA family. As to quaternary structure, forms a complex composed of PxpA, PxpB and PxpC.

It catalyses the reaction 5-oxo-L-proline + ATP + 2 H2O = L-glutamate + ADP + phosphate + H(+). In terms of biological role, catalyzes the cleavage of 5-oxoproline to form L-glutamate coupled to the hydrolysis of ATP to ADP and inorganic phosphate. This is 5-oxoprolinase subunit A 1 from Bordetella bronchiseptica (strain ATCC BAA-588 / NCTC 13252 / RB50) (Alcaligenes bronchisepticus).